Here is a 215-residue protein sequence, read N- to C-terminus: ATP-dependent dethiobiotin synthetase BioD (215 aa).

13-18 (DIGKTV) contacts ATP. Residue T17 participates in Mg(2+) binding. K38 is a catalytic residue. T42 lines the substrate pocket. ATP contacts are provided by residues D50, 115–118 (EGAG), and 175–176 (NH). D50 and E115 together coordinate Mg(2+).

Belongs to the dethiobiotin synthetase family. In terms of assembly, homodimer. Mg(2+) is required as a cofactor.

The protein localises to the cytoplasm. The catalysed reaction is (7R,8S)-7,8-diammoniononanoate + CO2 + ATP = (4R,5S)-dethiobiotin + ADP + phosphate + 3 H(+). The protein operates within cofactor biosynthesis; biotin biosynthesis; biotin from 7,8-diaminononanoate: step 1/2. Its function is as follows. Catalyzes a mechanistically unusual reaction, the ATP-dependent insertion of CO2 between the N7 and N8 nitrogen atoms of 7,8-diaminopelargonic acid (DAPA, also called 7,8-diammoniononanoate) to form a ureido ring. This is ATP-dependent dethiobiotin synthetase BioD from Neisseria meningitidis serogroup B (strain ATCC BAA-335 / MC58).